We begin with the raw amino-acid sequence, 1079 residues long: MGKKGKKSGYADWEDDLGEDISGQNEYLDNTSQDSPQNDELAEKSENLAVSSEKTTSKKKKGKKNKGNKNQVSDDESQELESPQGPKELTAVTELDDDEFDYKPKKGKKGKKSKKVEEDDEPQEIESPQGPKELTAVTELDDDEFDYKPKKGKKGKKAQNNNESEAAAPPEIPEVRVKTKKEKEREKKEREKLRKKQQQAKKKGSTGEDTLASSEVSSEVDISTPAENDSSAKGKQAAGSKRKGPNVTALQKMLEEKRAREEEEQRIREEEARIAEEEKRLAEVEEARKEEARLKKKEKERKKKEEMKAQGKYLSKKQKEQQALAQRRLQQMLESGVRVAGLSNGEKKQKPVYTNKKKSNRSGTSSISSSGILESSPATSISVDEPQKDSKDDSEKVEKETEVERKEENEAEAEAVFDDWEAALEEPEVAENNEVVTEKKETDIKSDAVEHSIKDKEDSKTDKVDDIPQAAPAESNVSESDLRSPICCILGHVDTGKTKLLDNLRRSNVQEGEAGGITQQIGATYFPIESIKQKTKVVNKKGKLQYNIPGLLIIDTPGHESFTNLRSRGTSLCNIAILVIDIMHGLEPQTIESIRLLRDQKTPFVVALNKVDRLYGWHSIKDNAIQDSLSKQKKAIQREFRDRVESIILQLNEQGLNAALYFENKNLGRYVSLVPTSAQSGEGVPDLVALLISLTQTRMSDRIKYITTLECTVLEVKVIEGLGATIDVILSNGVLHEGDRIVLCGMGGPIITTVRALLTPQPLKEMRVKSAYVHHKEIKAAMGVKICANDLEKAVAGSRLLVVGPDDDEEDLAEEIMEDLENLLGRIDTSGIGVSVQASTLGSLEALLEFLKQMKIPVASVNIGPVYKKDVMRCATMLEKAKEYALMLCFDVKVDRDAEDLAEQLGVKIFSANVIYHLFDAFTAHQKKILEQKREESSDVAVFPCVLKTVAAFNKRDPIILGVDVVEGVLRINTPIVAVKQLPNGEPQIIELGRVASLEMNHKPVDKVKKGQAGAGVAMKLESSGSQILFGRQVTESDALYSHITRQSIDSLKDPAFRDEVSRDEWQLIIQLKKLFGII.

The segment at 1 to 478 (MGKKGKKSGY…QAAPAESNVS (478 aa)) is disordered. The segment covering 22-38 (SGQNEYLDNTSQDSPQN) has biased composition (polar residues). Residues 57–67 (SKKKKGKKNKG) are compositionally biased toward basic residues. A phosphoserine mark is found at S73, S77, and S82. The segment covering 105–114 (KKGKKGKKSK) has biased composition (basic residues). S127 carries the phosphoserine modification. Residues 160–169 (NNNESEAAAP) are compositionally biased toward low complexity. A compositionally biased stretch (basic and acidic residues) spans 173–192 (PEVRVKTKKEKEREKKEREK). A compositionally biased stretch (basic residues) spans 193 to 204 (LRKKQQQAKKKG). Residues 207 to 233 (GEDTLASSEVSSEVDISTPAENDSSAK) are compositionally biased toward polar residues. Residues 253–293 (MLEEKRAREEEEQRIREEEARIAEEEKRLAEVEEARKEEAR) are compositionally biased toward basic and acidic residues. Low complexity-rich tracts occupy residues 321 to 334 (QQAL…QMLE) and 361 to 376 (RSGT…LESS). T364 bears the Phosphothreonine mark. Basic and acidic residues predominate over residues 385–408 (EPQKDSKDDSEKVEKETEVERKEE). Residues 409–431 (NEAEAEAVFDDWEAALEEPEVAE) are compositionally biased toward acidic residues. The span at 436–466 (VTEKKETDIKSDAVEHSIKDKEDSKTDKVDD) shows a compositional bias: basic and acidic residues. Residues 482–700 (LRSPICCILG…LISLTQTRMS (219 aa)) form the tr-type G domain. Residues 491–498 (GHVDTGKT) are G1. 491 to 498 (GHVDTGKT) contacts GTP. Positions 516–520 (GITQQ) are G2. The G3 stretch occupies residues 555-558 (DTPG). A G4 region spans residues 609-612 (NKVD). The interval 677-679 (SAQ) is G5.

Belongs to the TRAFAC class translation factor GTPase superfamily. Classic translation factor GTPase family. IF-2 subfamily. A monovalent cation serves as cofactor.

The protein resides in the cytoplasm. The enzyme catalyses GTP + H2O = GDP + phosphate + H(+). Functionally, plays a role in translation initiation. Translational GTPase that catalyzes the joining of the 40S and 60S subunits to form the 80S initiation complex with the initiator methionine-tRNA in the P-site base paired to the start codon. GTP binding and hydrolysis induces conformational changes in the enzyme that renders it active for productive interactions with the ribosome. The release of the enzyme after formation of the initiation complex is a prerequisite to form elongation-competent ribosomes. This chain is Eukaryotic translation initiation factor 5B, found in Schizosaccharomyces pombe (strain 972 / ATCC 24843) (Fission yeast).